Reading from the N-terminus, the 1590-residue chain is Defective chorion protein, FC177 isoform (1590 aa).

The signal sequence occupies residues 1-19 (MRLFSLLPLLALLVVQAAG). Disordered stretches follow at residues 23–60 (VTSDDPATDAGSTTNSTTDTKPRIPSQDEILGQMPSIN), 184–212 (APAPAPAAAPPPAPAPAADPPAAPVPDAP), and 268–294 (PAQPAAAGTDAQASDISEVRVRPEDPY). Polar residues predominate over residues 32 to 41 (AGSTTNSTTD). Residues 268–280 (PAQPAAAGTDAQA) show a composition bias toward low complexity. A run of 5 repeats spans residues 493–518 (QNPMMMQQRQWSEEQAKIQQNQQQIQ), 519–544 (QNPMMMQQRQWSEEQAKIQQNQQQIQ), 545–570 (QNPMMMQQRQWSEEQAKIQQNQQQIQ), 571–596 (QNPMMMQQRQWSEEQAKIQQNQQQIQ), and 597–622 (QNPMMVQQRQWSEEQAKIQQNQQQIQ). A 12 X 26 AA approximate tandem repeats, Glu, Met-rich region spans residues 493 to 788 (QNPMMMQQRQ…IQQQQRQMMQ (296 aa)). Residues 623–652 (QNPMMMQQRQWSEEQAKIQHDQQMAQQMAQ) form a 6; approximate repeat. Residues 653-680 (QGLMMTEQRQRQWSEDQAKIQQAQQMAQ) form a 7; approximate repeat. An 8; approximate repeat occupies 681–696 (QTPMMMPQMQQRQWTE). A 9; approximate repeat occupies 697–720 (DPQMVQQMQQRQWAEDQTRMQMAQ). One copy of the 10; approximate repeat lies at 721–733 (QNPMMQQQRQMAE). The 11; approximate repeat unit spans residues 734–758 (NPQMMQQRQWSEEQTKIEQAQQMAQ). A 12; approximate repeat occupies 759–788 (QNQMMMQQMQQRQWSEDQAQIQQQQRQMMQ). Disordered stretches follow at residues 843–875 (GPQMPENEGTARHKVDALGVGGNKRKKSKSKSA), 944–983 (RTINPKQPGEVGGSESQKSNSNPPTTLTPAPQEQPQEHRV), 1119–1221 (EEDA…TKSI), 1261–1352 (PVTE…DDNN), 1375–1515 (FAQG…QATV), and 1538–1590 (EKKS…QTKA). Over residues 957–977 (SESQKSNSNPPTTLTPAPQEQ) the composition is skewed to polar residues. Over residues 1119-1130 (EEDAQQEPMEEE) the composition is skewed to acidic residues. Positions 1131–1148 (QLQHDPNTEPQYNHKDFV) are enriched in basic and acidic residues. Positions 1151–1195 (TTSTASPITSTTEAATPTGSDSTSEATVTPEVTTTTSTSTTTTTE) are enriched in low complexity. Positions 1205–1221 (QQDSQAEAESSHVTKSI) are enriched in polar residues. Basic and acidic residues predominate over residues 1272–1288 (EPSKQEDKPKVEEKVIA). Acidic residues predominate over residues 1295 to 1306 (EQEEELEEDEDS). Composition is skewed to low complexity over residues 1307-1319 (TSISTTTETPSPS) and 1435-1452 (DSGSDSSDGTTTTTTPSP). A compositionally biased stretch (basic residues) spans 1493–1504 (QRPKKSMSKPKK). Positions 1505–1515 (QSSQVTTQATV) are enriched in low complexity. A compositionally biased stretch (basic residues) spans 1554 to 1576 (TKPKSIKPVKVIKRKRLRRRQHK). Polar residues predominate over residues 1577–1590 (SIATTIRSPIQTKA).

It is found in the secreted. Required for proper assembly of the eggshell. The polypeptide is Defective chorion protein, FC177 isoform (Drosophila melanogaster (Fruit fly)).